A 353-amino-acid chain; its full sequence is Holliday junction branch migration complex subunit RuvB (353 aa).

Residues 4–185 (ADRLITAVGG…FGIVQRLEFY (182 aa)) form a large ATPase domain (RuvB-L) region. ATP-binding positions include I24, R25, G66, K69, T70, T71, 132 to 134 (EDF), R175, Y185, and R222. T70 contributes to the Mg(2+) binding site. Residues 186–256 (NIADLSTIVA…TADKALNLLD (71 aa)) are small ATPAse domain (RuvB-S). The segment at 259 to 353 (EHGFDHQDRR…GEFVDDAADL (95 aa)) is head domain (RuvB-H). DNA contacts are provided by R295, R314, and R319.

The protein belongs to the RuvB family. As to quaternary structure, homohexamer. Forms an RuvA(8)-RuvB(12)-Holliday junction (HJ) complex. HJ DNA is sandwiched between 2 RuvA tetramers; dsDNA enters through RuvA and exits via RuvB. An RuvB hexamer assembles on each DNA strand where it exits the tetramer. Each RuvB hexamer is contacted by two RuvA subunits (via domain III) on 2 adjacent RuvB subunits; this complex drives branch migration. In the full resolvosome a probable DNA-RuvA(4)-RuvB(12)-RuvC(2) complex forms which resolves the HJ.

Its subcellular location is the cytoplasm. The enzyme catalyses ATP + H2O = ADP + phosphate + H(+). Functionally, the RuvA-RuvB-RuvC complex processes Holliday junction (HJ) DNA during genetic recombination and DNA repair, while the RuvA-RuvB complex plays an important role in the rescue of blocked DNA replication forks via replication fork reversal (RFR). RuvA specifically binds to HJ cruciform DNA, conferring on it an open structure. The RuvB hexamer acts as an ATP-dependent pump, pulling dsDNA into and through the RuvAB complex. RuvB forms 2 homohexamers on either side of HJ DNA bound by 1 or 2 RuvA tetramers; 4 subunits per hexamer contact DNA at a time. Coordinated motions by a converter formed by DNA-disengaged RuvB subunits stimulates ATP hydrolysis and nucleotide exchange. Immobilization of the converter enables RuvB to convert the ATP-contained energy into a lever motion, pulling 2 nucleotides of DNA out of the RuvA tetramer per ATP hydrolyzed, thus driving DNA branch migration. The RuvB motors rotate together with the DNA substrate, which together with the progressing nucleotide cycle form the mechanistic basis for DNA recombination by continuous HJ branch migration. Branch migration allows RuvC to scan DNA until it finds its consensus sequence, where it cleaves and resolves cruciform DNA. The protein is Holliday junction branch migration complex subunit RuvB of Pseudomonas syringae pv. tomato (strain ATCC BAA-871 / DC3000).